Here is a 177-residue protein sequence, read N- to C-terminus: Large ribosomal subunit protein uL6 (177 aa).

The protein belongs to the universal ribosomal protein uL6 family. In terms of assembly, part of the 50S ribosomal subunit.

This protein binds to the 23S rRNA, and is important in its secondary structure. It is located near the subunit interface in the base of the L7/L12 stalk, and near the tRNA binding site of the peptidyltransferase center. The polypeptide is Large ribosomal subunit protein uL6 (Bordetella petrii (strain ATCC BAA-461 / DSM 12804 / CCUG 43448)).